A 165-amino-acid polypeptide reads, in one-letter code: Ribosome maturation factor RimM (165 aa).

The PRC barrel domain maps to 89 to 161 (EADTHYIVDL…KIVVKPVRQW (73 aa)).

Belongs to the RimM family. Binds ribosomal protein uS19.

It localises to the cytoplasm. Its function is as follows. An accessory protein needed during the final step in the assembly of 30S ribosomal subunit, possibly for assembly of the head region. Essential for efficient processing of 16S rRNA. May be needed both before and after RbfA during the maturation of 16S rRNA. It has affinity for free ribosomal 30S subunits but not for 70S ribosomes. The chain is Ribosome maturation factor RimM from Clostridium botulinum (strain Alaska E43 / Type E3).